The sequence spans 173 residues: Large ribosomal subunit protein uL10 (173 aa).

It belongs to the universal ribosomal protein uL10 family. As to quaternary structure, part of the ribosomal stalk of the 50S ribosomal subunit. The N-terminus interacts with L11 and the large rRNA to form the base of the stalk. The C-terminus forms an elongated spine to which L12 dimers bind in a sequential fashion forming a multimeric L10(L12)X complex.

Functionally, forms part of the ribosomal stalk, playing a central role in the interaction of the ribosome with GTP-bound translation factors. This Myxococcus xanthus (strain DK1622) protein is Large ribosomal subunit protein uL10.